A 273-amino-acid chain; its full sequence is Ribosomal protein L11 methyltransferase (273 aa).

S-adenosyl-L-methionine is bound by residues Thr112, Gly133, Asp155, and Asn203.

Belongs to the methyltransferase superfamily. PrmA family.

Its subcellular location is the cytoplasm. The enzyme catalyses L-lysyl-[protein] + 3 S-adenosyl-L-methionine = N(6),N(6),N(6)-trimethyl-L-lysyl-[protein] + 3 S-adenosyl-L-homocysteine + 3 H(+). In terms of biological role, methylates ribosomal protein L11. The chain is Ribosomal protein L11 methyltransferase from Deinococcus radiodurans (strain ATCC 13939 / DSM 20539 / JCM 16871 / CCUG 27074 / LMG 4051 / NBRC 15346 / NCIMB 9279 / VKM B-1422 / R1).